The following is a 343-amino-acid chain: Isopentenyl-diphosphate delta-isomerase (343 aa).

9-10 is a binding site for substrate; that stretch reads RK. Residues Ser67, 68 to 70, Ser98, and Asn127 contribute to the FMN site; that span reads AMT. 98-100 provides a ligand contact to substrate; that stretch reads SQR. Substrate is bound at residue Gln162. Glu163 contributes to the Mg(2+) binding site. Residues Lys194, Thr224, 273–275, and 294–295 contribute to the FMN site; these read GVR and AA.

It belongs to the IPP isomerase type 2 family. In terms of assembly, homooctamer. Dimer of tetramers. The cofactor is FMN. It depends on NADPH as a cofactor. Requires Mg(2+) as cofactor.

The protein localises to the cytoplasm. The catalysed reaction is isopentenyl diphosphate = dimethylallyl diphosphate. Functionally, involved in the biosynthesis of isoprenoids. Catalyzes the 1,3-allylic rearrangement of the homoallylic substrate isopentenyl (IPP) to its allylic isomer, dimethylallyl diphosphate (DMAPP). This is Isopentenyl-diphosphate delta-isomerase from Xanthobacter autotrophicus (strain ATCC BAA-1158 / Py2).